Here is a 209-residue protein sequence, read N- to C-terminus: Small ribosomal subunit protein uS3 (209 aa).

The 70-residue stretch at 38 to 107 folds into the KH type-2 domain; it reads IRKVIKNKYA…RFIVNVEEIK (70 aa).

This sequence belongs to the universal ribosomal protein uS3 family. As to quaternary structure, part of the 30S ribosomal subunit. Forms a tight complex with proteins S10 and S14.

Functionally, binds the lower part of the 30S subunit head. Binds mRNA in the 70S ribosome, positioning it for translation. This Thermosipho africanus (strain TCF52B) protein is Small ribosomal subunit protein uS3.